Consider the following 262-residue polypeptide: Snake venom serine proteinase 9 (262 aa).

The first 18 residues, 1 to 18, serve as a signal peptide directing secretion; it reads MVLIRVLANLLILQLSYA. Residues 19–24 constitute a propeptide that is removed on maturation; it reads QKSSEL. The Peptidase S1 domain occupies 25 to 253; the sequence is VIGGDECNID…HLDWIQSIIA (229 aa). 5 cysteine pairs are disulfide-bonded: Cys-31/Cys-165, Cys-52/Cys-68, Cys-144/Cys-214, Cys-176/Cys-193, and Cys-204/Cys-229. Residue His-67 is the Charge relay system of the active site. An N-linked (GlcNAc...) asparagine glycan is attached at Asn-105. The active-site Charge relay system is the Asp-112. Catalysis depends on Ser-208, which acts as the Charge relay system.

The protein belongs to the peptidase S1 family. Snake venom subfamily. Monomer. As to expression, expressed by the venom gland.

It is found in the secreted. Functionally, snake venom serine protease that may act in the hemostasis system of the prey. The sequence is that of Snake venom serine proteinase 9 from Crotalus adamanteus (Eastern diamondback rattlesnake).